The following is a 594-amino-acid chain: Membrane protein insertase YidC (594 aa).

The chain crosses the membrane as a helical span at residues tyrosine 7–serine 27. The disordered stretch occupies residues alanine 36 to arginine 73. The segment covering alanine 37–alanine 65 has biased composition (low complexity). 4 consecutive transmembrane segments (helical) span residues leucine 369–phenylalanine 389, tryptophan 443–isoleucine 463, leucine 488–isoleucine 508, and phenylalanine 532–isoleucine 552.

The protein belongs to the OXA1/ALB3/YidC family. Type 1 subfamily. In terms of assembly, interacts with the Sec translocase complex via SecD. Specifically interacts with transmembrane segments of nascent integral membrane proteins during membrane integration.

The protein resides in the cell inner membrane. Functionally, required for the insertion and/or proper folding and/or complex formation of integral membrane proteins into the membrane. Involved in integration of membrane proteins that insert both dependently and independently of the Sec translocase complex, as well as at least some lipoproteins. Aids folding of multispanning membrane proteins. The chain is Membrane protein insertase YidC from Rhizobium meliloti (strain 1021) (Ensifer meliloti).